A 177-amino-acid chain; its full sequence is Peptide methionine sulfoxide reductase MsrA (177 aa).

Residue cysteine 14 is part of the active site.

This sequence belongs to the MsrA Met sulfoxide reductase family.

It catalyses the reaction L-methionyl-[protein] + [thioredoxin]-disulfide + H2O = L-methionyl-(S)-S-oxide-[protein] + [thioredoxin]-dithiol. The catalysed reaction is [thioredoxin]-disulfide + L-methionine + H2O = L-methionine (S)-S-oxide + [thioredoxin]-dithiol. In terms of biological role, has an important function as a repair enzyme for proteins that have been inactivated by oxidation. Catalyzes the reversible oxidation-reduction of methionine sulfoxide in proteins to methionine. This chain is Peptide methionine sulfoxide reductase MsrA, found in Bacillus velezensis (strain DSM 23117 / BGSC 10A6 / LMG 26770 / FZB42) (Bacillus amyloliquefaciens subsp. plantarum).